The following is a 190-amino-acid chain: Homeobox protein SEBOX (190 aa).

Positions 1–11 (MPSPVDASSAD) are enriched in low complexity. 2 disordered regions span residues 1 to 24 (MPSP…RKRT) and 82 to 161 (ILSP…VHPS). The homeobox DNA-binding region spans 19–78 (HRRKRTTFSKGQLLELERAFAAWPYPNISTHEHLAWVTCLPEAKVQVWFQKRWAKIIKNR). A compositionally biased stretch (polar residues) spans 89 to 100 (CPQSSCSLPDTL).

The protein belongs to the paired homeobox family.

It is found in the nucleus. In terms of biological role, probable transcription factor involved in the control of specification of mesoderm and endoderm. The polypeptide is Homeobox protein SEBOX (SEBOX) (Homo sapiens (Human)).